The sequence spans 431 residues: Trigger factor (431 aa).

The region spanning 164–249 (GNIAVIDFKG…IKEIKVKELP (86 aa)) is the PPIase FKBP-type domain.

The protein belongs to the FKBP-type PPIase family. Tig subfamily.

It is found in the cytoplasm. The catalysed reaction is [protein]-peptidylproline (omega=180) = [protein]-peptidylproline (omega=0). In terms of biological role, involved in protein export. Acts as a chaperone by maintaining the newly synthesized protein in an open conformation. Functions as a peptidyl-prolyl cis-trans isomerase. This chain is Trigger factor, found in Clostridium tetani (strain Massachusetts / E88).